Reading from the N-terminus, the 272-residue chain is MIGSEIRMAKLFDKGRALVVALDHGLVMGPLKGIENPVEVVAKIAKNGPDALQMTPSMVKLVKENFFSRGSPMLITRLDTANVWRQKYKVYNEGYYASIYTVKDAISAGADAVVTYLVVGYGNDTVEGYNLSVLSSLRKEANDYGIPFIVEPLYVTKDNPDSVKEVDLVKYVTRLASEIGADILKVDYTGNKESFRQVINVAFSPILIRGGPKTNTTEEFLRMLRDALEAGAKGVTVGRNLWQAEEPDKLAKAISKVIHENADIGEALKILK.

Lysine 185 (schiff-base intermediate with substrate) is an active-site residue.

Belongs to the DeoC/FbaB aldolase family.

This is an uncharacterized protein from Saccharolobus solfataricus (strain ATCC 35092 / DSM 1617 / JCM 11322 / P2) (Sulfolobus solfataricus).